The following is a 246-amino-acid chain: tRNA pseudouridine synthase A (246 aa).

Aspartate 52 functions as the Nucleophile in the catalytic mechanism. Substrate is bound at residue tyrosine 111.

It belongs to the tRNA pseudouridine synthase TruA family. As to quaternary structure, homodimer.

The enzyme catalyses uridine(38/39/40) in tRNA = pseudouridine(38/39/40) in tRNA. In terms of biological role, formation of pseudouridine at positions 38, 39 and 40 in the anticodon stem and loop of transfer RNAs. This chain is tRNA pseudouridine synthase A, found in Borreliella burgdorferi (strain ATCC 35210 / DSM 4680 / CIP 102532 / B31) (Borrelia burgdorferi).